A 116-amino-acid polypeptide reads, in one-letter code: Large ribosomal subunit protein bL19 (116 aa).

Belongs to the bacterial ribosomal protein bL19 family.

In terms of biological role, this protein is located at the 30S-50S ribosomal subunit interface and may play a role in the structure and function of the aminoacyl-tRNA binding site. The chain is Large ribosomal subunit protein bL19 from Streptomyces griseus subsp. griseus (strain JCM 4626 / CBS 651.72 / NBRC 13350 / KCC S-0626 / ISP 5235).